The chain runs to 233 residues: Octanoyltransferase (233 aa).

The BPL/LPL catalytic domain occupies 38–218 (AGGPDTLLLL…AVCDALDGVL (181 aa)). Basic and acidic residues predominate over residues 57–66 (RRTEPHERPL). The tract at residues 57–77 (RRTEPHERPLDGTPVVDTDRG) is disordered. Substrate contacts are provided by residues 76–83 (RGGKITWH), 148–150 (AIG), and 161–163 (GFA). Cys-179 (acyl-thioester intermediate) is an active-site residue.

It belongs to the LipB family.

Its subcellular location is the cytoplasm. The catalysed reaction is octanoyl-[ACP] + L-lysyl-[protein] = N(6)-octanoyl-L-lysyl-[protein] + holo-[ACP] + H(+). It participates in protein modification; protein lipoylation via endogenous pathway; protein N(6)-(lipoyl)lysine from octanoyl-[acyl-carrier-protein]: step 1/2. Functionally, catalyzes the transfer of endogenously produced octanoic acid from octanoyl-acyl-carrier-protein onto the lipoyl domains of lipoate-dependent enzymes. Lipoyl-ACP can also act as a substrate although octanoyl-ACP is likely to be the physiological substrate. This chain is Octanoyltransferase, found in Mycolicibacterium paratuberculosis (strain ATCC BAA-968 / K-10) (Mycobacterium paratuberculosis).